Consider the following 240-residue polypeptide: MKMMDANEIISFIQKSEKKTPVKVYIKGNLKEVTFPETVQAFVNKKSGVLFGEWSEIKTILDENSKYIVDYVVENDRRNSAIPMLDLKGIKARIEPGAIIRDHVEIGDNAVIMMNATINIGAVIGEGSMIDMNAVLGGRATVGKNCHVGAGAVLAGVIEPPSAKPVIVEDDVVIGANVVVLEGVTVGKGAVVAAGAVVTEDVPPYTVVAGTPARVIKEIDEKTKAKTEIKQELRQLNPEK.

This sequence belongs to the transferase hexapeptide repeat family. DapH subfamily.

It catalyses the reaction (S)-2,3,4,5-tetrahydrodipicolinate + acetyl-CoA + H2O = L-2-acetamido-6-oxoheptanedioate + CoA. Its pathway is amino-acid biosynthesis; L-lysine biosynthesis via DAP pathway; LL-2,6-diaminopimelate from (S)-tetrahydrodipicolinate (acetylase route): step 1/3. Its function is as follows. Catalyzes the transfer of an acetyl group from acetyl-CoA to tetrahydrodipicolinate. This Bacillus cereus (strain AH187) protein is 2,3,4,5-tetrahydropyridine-2,6-dicarboxylate N-acetyltransferase.